Consider the following 150-residue polypeptide: Aspartate 1-decarboxylase (150 aa).

The active-site Schiff-base intermediate with substrate; via pyruvic acid is the Ser-24. A Pyruvic acid (Ser) modification is found at Ser-24. A substrate-binding site is contributed by Thr-56. Tyr-57 (proton donor) is an active-site residue. Residue 72–74 (GAA) coordinates substrate.

It belongs to the PanD family. As to quaternary structure, heterooctamer of four alpha and four beta subunits. Pyruvate serves as cofactor. Post-translationally, is synthesized initially as an inactive proenzyme, which is activated by self-cleavage at a specific serine bond to produce a beta-subunit with a hydroxyl group at its C-terminus and an alpha-subunit with a pyruvoyl group at its N-terminus.

It is found in the cytoplasm. It carries out the reaction L-aspartate + H(+) = beta-alanine + CO2. Its pathway is cofactor biosynthesis; (R)-pantothenate biosynthesis; beta-alanine from L-aspartate: step 1/1. Its function is as follows. Catalyzes the pyruvoyl-dependent decarboxylation of aspartate to produce beta-alanine. This Xanthobacter autotrophicus (strain ATCC BAA-1158 / Py2) protein is Aspartate 1-decarboxylase.